A 206-amino-acid chain; its full sequence is Putative archaetidylserine decarboxylase proenzyme (206 aa).

Ser172 (schiff-base intermediate with substrate; via pyruvic acid) is an active-site residue. Ser172 is modified (pyruvic acid (Ser); by autocatalysis).

It belongs to the phosphatidylserine decarboxylase family. PSD-A subfamily. Heterodimer of a large membrane-associated beta subunit and a small pyruvoyl-containing alpha subunit. It depends on pyruvate as a cofactor. Post-translationally, is synthesized initially as an inactive proenzyme. Formation of the active enzyme involves a self-maturation process in which the active site pyruvoyl group is generated from an internal serine residue via an autocatalytic post-translational modification. Two non-identical subunits are generated from the proenzyme in this reaction, and the pyruvate is formed at the N-terminus of the alpha chain, which is derived from the carboxyl end of the proenzyme. The post-translation cleavage follows an unusual pathway, termed non-hydrolytic serinolysis, in which the side chain hydroxyl group of the serine supplies its oxygen atom to form the C-terminus of the beta chain, while the remainder of the serine residue undergoes an oxidative deamination to produce ammonia and the pyruvoyl prosthetic group on the alpha chain.

It is found in the cell membrane. The enzyme catalyses archaetidylserine + H(+) = archaetidylethanolamine + CO2. Functionally, catalyzes the formation of archaetidylethanolamine (PtdEtn) from archaetidylserine (PtdSer). This is Putative archaetidylserine decarboxylase proenzyme from Methanocaldococcus jannaschii (strain ATCC 43067 / DSM 2661 / JAL-1 / JCM 10045 / NBRC 100440) (Methanococcus jannaschii).